Reading from the N-terminus, the 266-residue chain is Putative pyruvate, phosphate dikinase regulatory protein (266 aa).

An ADP-binding site is contributed by 149-156 (GVSRTSKT).

The protein belongs to the pyruvate, phosphate/water dikinase regulatory protein family. PDRP subfamily.

The catalysed reaction is N(tele)-phospho-L-histidyl/L-threonyl-[pyruvate, phosphate dikinase] + ADP = N(tele)-phospho-L-histidyl/O-phospho-L-threonyl-[pyruvate, phosphate dikinase] + AMP + H(+). It catalyses the reaction N(tele)-phospho-L-histidyl/O-phospho-L-threonyl-[pyruvate, phosphate dikinase] + phosphate + H(+) = N(tele)-phospho-L-histidyl/L-threonyl-[pyruvate, phosphate dikinase] + diphosphate. Functionally, bifunctional serine/threonine kinase and phosphorylase involved in the regulation of the pyruvate, phosphate dikinase (PPDK) by catalyzing its phosphorylation/dephosphorylation. In Geobacillus thermodenitrificans (strain NG80-2), this protein is Putative pyruvate, phosphate dikinase regulatory protein.